Consider the following 303-residue polypeptide: Dipeptide transport system permease protein DppB (303 aa).

7 consecutive transmembrane segments (helical) span residues 9–29 (LGLLLLTLFLIVTLTFFMMQV), 62–82 (YFIYVGHMFTGNFGTSFIYTN), 93–113 (LPVSMQLGTQALILGTVLGAL), 129–149 (IFGFLSVLGISVPSFVIGTLI), 166–186 (GTFSQTIMPTIALSFAPMAVV), 227–247 (IPMLTLIGPMAAGLLTGSVLI), and 269–289 (FPVIMATTIVYAVILMVFILV). An ABC transmembrane type-1 domain is found at 93–290 (LPVSMQLGTQ…VILMVFILVT (198 aa)).

This sequence belongs to the binding-protein-dependent transport system permease family. OppBC subfamily. As to quaternary structure, the complex is composed of two ATP-binding proteins (DppD and DppF), two transmembrane proteins (DppB and DppC) and a solute-binding protein (DppA).

The protein localises to the cell membrane. Its function is as follows. Part of the ABC transporter DppABCDF involved in dipeptide transport. Responsible for the translocation of the substrate across the membrane. The protein is Dipeptide transport system permease protein DppB of Lactococcus lactis subsp. cremoris (strain MG1363).